Here is a 151-residue protein sequence, read N- to C-terminus: Cytochrome c-type biogenesis protein CcmE 1 (151 aa).

At 1–8 (MNPLRKKR) the chain is on the cytoplasmic side. Residues 9-29 (LIIILAILVGVGAAVGLALSA) form a helical; Signal-anchor for type II membrane protein membrane-spanning segment. Residues 30–151 (LQQNINLFYT…QSAPTPAKEG (122 aa)) lie on the Periplasmic side of the membrane. The heme site is built by His124 and Tyr128. Positions 131–151 (PEVTKALKDSGQSAPTPAKEG) are disordered.

This sequence belongs to the CcmE/CycJ family.

It is found in the cell inner membrane. Heme chaperone required for the biogenesis of c-type cytochromes. Transiently binds heme delivered by CcmC and transfers the heme to apo-cytochromes in a process facilitated by CcmF and CcmH. The sequence is that of Cytochrome c-type biogenesis protein CcmE 1 from Pseudomonas fluorescens (strain Pf0-1).